The sequence spans 80 residues: LSM complex subunit lsm5 (80 aa).

Residues 6 to 79 enclose the Sm domain; that stretch reads LPLELIDKCI…MCMLIPGGKP (74 aa).

Belongs to the snRNP Sm proteins family. Component of the heptameric LSM1-LSM7 complex that forms a seven-membered ring structure with a donut shape. The LSm subunits are arranged in the order lsm1, lsm2, lsm3, lsm6, lsm5, lsm7 and lsm4. Component of the heptameric LSM2-LSM8 complex that forms a seven-membered ring structure with a donut shape. The LSm subunits are arranged in the order lsm8, lsm2, lsm3, lsm6, lsm5, lsm7 and lsm4.

The protein localises to the nucleus. Functionally, component of LSm protein complexes, which are involved in RNA processing and may function in a chaperone-like manner. Component of the cytoplasmic LSM1-LSM7 complex which is involved in mRNA degradation by activating the decapping step. The LSM1-LSM7 complex loads onto the 3'-end of single stranded RNA. Component of the nuclear LSM2-LSM8 complex, which is involved in spliceosome assembly. The LSM2-LSM8 complex plays a role in the biogenesis of the spliceosomal U4/U6-U5 tri-snRNP complex by accelerating prp24-mediated annealing of U4/U6 di-snRNA. The LSM2-LSM8 complex binds U6 snRNA terminating with a cyclic 2',3' phosphate group; RNA with an unmodified 3' hydroxyl or non-cyclic 3' phosphate is bound less tightly. The protein is LSM complex subunit lsm5 (lsm5) of Schizosaccharomyces pombe (strain 972 / ATCC 24843) (Fission yeast).